Consider the following 363-residue polypeptide: UDP-3-O-acylglucosamine N-acyltransferase (363 aa).

His252 functions as the Proton acceptor in the catalytic mechanism.

It belongs to the transferase hexapeptide repeat family. LpxD subfamily. As to quaternary structure, homotrimer.

The enzyme catalyses a UDP-3-O-[(3R)-3-hydroxyacyl]-alpha-D-glucosamine + a (3R)-hydroxyacyl-[ACP] = a UDP-2-N,3-O-bis[(3R)-3-hydroxyacyl]-alpha-D-glucosamine + holo-[ACP] + H(+). It functions in the pathway bacterial outer membrane biogenesis; LPS lipid A biosynthesis. Its function is as follows. Catalyzes the N-acylation of UDP-3-O-acylglucosamine using 3-hydroxyacyl-ACP as the acyl donor. Is involved in the biosynthesis of lipid A, a phosphorylated glycolipid that anchors the lipopolysaccharide to the outer membrane of the cell. The polypeptide is UDP-3-O-acylglucosamine N-acyltransferase (Cupriavidus necator (strain ATCC 17699 / DSM 428 / KCTC 22496 / NCIMB 10442 / H16 / Stanier 337) (Ralstonia eutropha)).